The sequence spans 123 residues: Holo-[acyl-carrier-protein] synthase (123 aa).

Mg(2+)-binding residues include D9 and E57.

The protein belongs to the P-Pant transferase superfamily. AcpS family. Requires Mg(2+) as cofactor.

The protein resides in the cytoplasm. It carries out the reaction apo-[ACP] + CoA = holo-[ACP] + adenosine 3',5'-bisphosphate + H(+). In terms of biological role, transfers the 4'-phosphopantetheine moiety from coenzyme A to a Ser of acyl-carrier-protein. In Streptomyces avermitilis (strain ATCC 31267 / DSM 46492 / JCM 5070 / NBRC 14893 / NCIMB 12804 / NRRL 8165 / MA-4680), this protein is Holo-[acyl-carrier-protein] synthase.